The sequence spans 249 residues: Phosphate import ATP-binding protein PstB 2 (249 aa).

The ABC transporter domain occupies 4-244 (FDIENLDLYY…PSDDRTRGYV (241 aa)). 36–43 (GPSGCGKS) serves as a coordination point for ATP.

It belongs to the ABC transporter superfamily. Phosphate importer (TC 3.A.1.7) family. In terms of assembly, the complex is composed of two ATP-binding proteins (PstB), two transmembrane proteins (PstC and PstA) and a solute-binding protein (PstS).

Its subcellular location is the cell inner membrane. The enzyme catalyses phosphate(out) + ATP + H2O = ADP + 2 phosphate(in) + H(+). In terms of biological role, part of the ABC transporter complex PstSACB involved in phosphate import. Responsible for energy coupling to the transport system. The protein is Phosphate import ATP-binding protein PstB 2 of Vibrio vulnificus (strain CMCP6).